A 365-amino-acid polypeptide reads, in one-letter code: UBX domain-containing protein 2B (365 aa).

Positions 1-97 (MADGGASPAQ…MSDDKENQRF (97 aa)) are disordered. Basic and acidic residues-rich tracts occupy residues 50 to 63 (DEAKRQSLRSDKPT) and 73 to 95 (LKIDSFRSLRKPERSMSDDKENQ). The SEP domain maps to 175-240 (DVQILLKLWR…MEDHQEQEYV (66 aa)). Residues 286–363 (DSVPATKIQI…DILNTVILQQ (78 aa)) enclose the UBX domain.

It belongs to the NSFL1C family.

Its subcellular location is the nucleus. The protein localises to the cytoplasm. The protein resides in the cytosol. It is found in the endoplasmic reticulum. It localises to the golgi apparatus. Its subcellular location is the cytoskeleton. The protein localises to the microtubule organizing center. The protein resides in the centrosome. Adapter protein required for Golgi and endoplasmic reticulum biogenesis. Involved in Golgi and endoplasmic reticulum maintenance during interphase and in their reassembly at the end of mitosis. Regulates the centrosomal levels of kinase AURKA/Aurora A during mitotic progression by promoting AURKA removal from centrosomes in prophase. Also, regulates spindle orientation during mitosis. The sequence is that of UBX domain-containing protein 2B (UBXN2B) from Gallus gallus (Chicken).